The chain runs to 295 residues: Aspartate carbamoyltransferase catalytic subunit (295 aa).

The carbamoyl phosphate site is built by R49 and T50. An L-aspartate-binding site is contributed by K77. Residues R99, H127, and Q130 each contribute to the carbamoyl phosphate site. L-aspartate is bound by residues R161 and R212. Carbamoyl phosphate contacts are provided by G251 and P252.

It belongs to the aspartate/ornithine carbamoyltransferase superfamily. ATCase family. In terms of assembly, heterododecamer (2C3:3R2) of six catalytic PyrB chains organized as two trimers (C3), and six regulatory PyrI chains organized as three dimers (R2).

It carries out the reaction carbamoyl phosphate + L-aspartate = N-carbamoyl-L-aspartate + phosphate + H(+). It participates in pyrimidine metabolism; UMP biosynthesis via de novo pathway; (S)-dihydroorotate from bicarbonate: step 2/3. Functionally, catalyzes the condensation of carbamoyl phosphate and aspartate to form carbamoyl aspartate and inorganic phosphate, the committed step in the de novo pyrimidine nucleotide biosynthesis pathway. The protein is Aspartate carbamoyltransferase catalytic subunit of Campylobacter jejuni subsp. jejuni serotype O:6 (strain 81116 / NCTC 11828).